Consider the following 193-residue polypeptide: MNFLAHLHLAHLADSSLSGNLLADFVRGNPATHYPPDVVEGIYMHRRIDVMTDNLPEVREAREWFRHETRRVAPITLDVMWDHFLSRHWTQISPDFPLQAFVAYAHAQVATILPDSPPRFVNLNDYLWSEKWLERYRDMDFIQNVLNGMANRRPRLDALRDSWYDLDAHYDALEERFWHFYPRMMAQAARKAL.

Belongs to the AcpH family.

It carries out the reaction holo-[ACP] + H2O = apo-[ACP] + (R)-4'-phosphopantetheine + H(+). Converts holo-ACP to apo-ACP by hydrolytic cleavage of the phosphopantetheine prosthetic group from ACP. In Salmonella dublin (strain CT_02021853), this protein is Acyl carrier protein phosphodiesterase.